A 308-amino-acid polypeptide reads, in one-letter code: 1D-myo-inositol 2-acetamido-2-deoxy-alpha-D-glucopyranoside deacetylase (308 aa).

Zn(2+)-binding residues include histidine 37, aspartate 40, and histidine 171.

Belongs to the MshB deacetylase family. It depends on Zn(2+) as a cofactor.

The enzyme catalyses 1D-myo-inositol 2-acetamido-2-deoxy-alpha-D-glucopyranoside + H2O = 1D-myo-inositol 2-amino-2-deoxy-alpha-D-glucopyranoside + acetate. Functionally, catalyzes the deacetylation of 1D-myo-inositol 2-acetamido-2-deoxy-alpha-D-glucopyranoside (GlcNAc-Ins) in the mycothiol biosynthesis pathway. In Mycobacterium sp. (strain JLS), this protein is 1D-myo-inositol 2-acetamido-2-deoxy-alpha-D-glucopyranoside deacetylase.